The primary structure comprises 259 residues: Thiazole synthase (259 aa).

The active-site Schiff-base intermediate with DXP is the Lys-100. Residues Gly-161, 187 to 188 (AG), and 209 to 210 (NT) each bind 1-deoxy-D-xylulose 5-phosphate.

The protein belongs to the ThiG family. As to quaternary structure, homotetramer. Forms heterodimers with either ThiH or ThiS.

It localises to the cytoplasm. It carries out the reaction [ThiS sulfur-carrier protein]-C-terminal-Gly-aminoethanethioate + 2-iminoacetate + 1-deoxy-D-xylulose 5-phosphate = [ThiS sulfur-carrier protein]-C-terminal Gly-Gly + 2-[(2R,5Z)-2-carboxy-4-methylthiazol-5(2H)-ylidene]ethyl phosphate + 2 H2O + H(+). Its pathway is cofactor biosynthesis; thiamine diphosphate biosynthesis. Functionally, catalyzes the rearrangement of 1-deoxy-D-xylulose 5-phosphate (DXP) to produce the thiazole phosphate moiety of thiamine. Sulfur is provided by the thiocarboxylate moiety of the carrier protein ThiS. In vitro, sulfur can be provided by H(2)S. The chain is Thiazole synthase from Methylobacillus flagellatus (strain ATCC 51484 / DSM 6875 / VKM B-1610 / KT).